Consider the following 173-residue polypeptide: Shikimate kinase 1 (173 aa).

14–19 (GAGKST) contacts ATP. Serine 18 contributes to the Mg(2+) binding site. The substrate site is built by aspartate 36, arginine 60, and glycine 82. ATP is bound at residue arginine 120. Position 140 (arginine 140) interacts with substrate. An ATP-binding site is contributed by glutamine 157.

It belongs to the shikimate kinase family. In terms of assembly, monomer. Requires Mg(2+) as cofactor.

The protein localises to the cytoplasm. The catalysed reaction is shikimate + ATP = 3-phosphoshikimate + ADP + H(+). It participates in metabolic intermediate biosynthesis; chorismate biosynthesis; chorismate from D-erythrose 4-phosphate and phosphoenolpyruvate: step 5/7. Functionally, catalyzes the specific phosphorylation of the 3-hydroxyl group of shikimic acid using ATP as a cosubstrate. This Escherichia fergusonii (strain ATCC 35469 / DSM 13698 / CCUG 18766 / IAM 14443 / JCM 21226 / LMG 7866 / NBRC 102419 / NCTC 12128 / CDC 0568-73) protein is Shikimate kinase 1.